The sequence spans 1165 residues: Valine--tRNA ligase (1165 aa).

The short motif at 43–53 (PNVTGSLHMGH) is the 'HIGH' region element. The 'KMSKS' region motif lies at 800–804 (KMSKT). Lys-803 is an ATP binding site. Coiled-coil stretches lie at residues 1001-1032 (KNEDEIYEEDKQKVERLKEIISAIRAIRSDLQ) and 1097-1165 (HVDL…VLRS).

It belongs to the class-I aminoacyl-tRNA synthetase family. ValS type 1 subfamily. Monomer.

Its subcellular location is the cytoplasm. The catalysed reaction is tRNA(Val) + L-valine + ATP = L-valyl-tRNA(Val) + AMP + diphosphate. Its function is as follows. Catalyzes the attachment of valine to tRNA(Val). As ValRS can inadvertently accommodate and process structurally similar amino acids such as threonine, to avoid such errors, it has a 'posttransfer' editing activity that hydrolyzes mischarged Thr-tRNA(Val) in a tRNA-dependent manner. This chain is Valine--tRNA ligase, found in Aquifex aeolicus (strain VF5).